Reading from the N-terminus, the 238-residue chain is Nucleoside diphosphate kinase III, chloroplastic/mitochondrial (238 aa).

The N-terminal 85 residues, 1-85 (MSSQICRSAS…YMIQDQEVLA (85 aa)), are a transit peptide targeting the chloroplast and mitochondrion. ATP is bound by residues Lys96, Phe144, Arg172, Thr178, Arg189, and Asn199. Catalysis depends on His202, which acts as the Pros-phosphohistidine intermediate.

The protein belongs to the NDK family. In terms of assembly, homohexamer. The cofactor is Mg(2+).

The protein localises to the plastid. It localises to the chloroplast thylakoid lumen. It is found in the mitochondrion intermembrane space. The catalysed reaction is a 2'-deoxyribonucleoside 5'-diphosphate + ATP = a 2'-deoxyribonucleoside 5'-triphosphate + ADP. The enzyme catalyses a ribonucleoside 5'-diphosphate + ATP = a ribonucleoside 5'-triphosphate + ADP. Major role in the synthesis of nucleoside triphosphates other than ATP. The ATP gamma phosphate is transferred to the NDP beta phosphate via a ping-pong mechanism, using a phosphorylated active-site intermediate. Shows the highest specificity towards GDP. The sequence is that of Nucleoside diphosphate kinase III, chloroplastic/mitochondrial (NDPK3) from Arabidopsis thaliana (Mouse-ear cress).